The chain runs to 254 residues: Small ribosomal subunit protein eS1 (254 aa).

The residue at position 2 (Ala-2) is an N-acetylalanine; partial.

It belongs to the eukaryotic ribosomal protein eS1 family. As to quaternary structure, component of the small ribosomal subunit. Mature ribosomes consist of a small (40S) and a large (60S) subunit. The 40S subunit contains about 33 different proteins and 1 molecule of RNA (18S). The 60S subunit contains about 49 different proteins and 3 molecules of RNA (25S, 5.8S and 5S).

The protein resides in the cytoplasm. The polypeptide is Small ribosomal subunit protein eS1 (Zygosaccharomyces rouxii (strain ATCC 2623 / CBS 732 / NBRC 1130 / NCYC 568 / NRRL Y-229)).